Here is a 389-residue protein sequence, read N- to C-terminus: GTPase Obg (389 aa).

Positions 1–159 (MKFVDEAVIR…RSLKLELMLL (159 aa)) constitute an Obg domain. The interval 122-144 (FHGLGNTRFKSSTNRAPRQKTLG) is disordered. The OBG-type G domain occupies 160-333 (ADVGLLGMPN…LSLKLIDFIE (174 aa)). GTP-binding positions include 166 to 173 (GMPNAGKS), 191 to 195 (FTTLV), 213 to 216 (DIPG), 283 to 286 (NKTD), and 314 to 316 (SAY). Mg(2+) contacts are provided by serine 173 and threonine 193.

This sequence belongs to the TRAFAC class OBG-HflX-like GTPase superfamily. OBG GTPase family. In terms of assembly, monomer. Mg(2+) serves as cofactor.

Its subcellular location is the cytoplasm. Its function is as follows. An essential GTPase which binds GTP, GDP and possibly (p)ppGpp with moderate affinity, with high nucleotide exchange rates and a fairly low GTP hydrolysis rate. Plays a role in control of the cell cycle, stress response, ribosome biogenesis and in those bacteria that undergo differentiation, in morphogenesis control. This chain is GTPase Obg, found in Shewanella woodyi (strain ATCC 51908 / MS32).